A 315-amino-acid polypeptide reads, in one-letter code: ADP/ATP translocase (315 aa).

The Mitochondrial intermembrane segment spans residues 1–13; that stretch reads MSNKQETKILGMP. 2 Solcar repeats span residues 13–106 and 118–210; these read PPFV…FKAM and KWMA…IKPV. Residues 14-37 traverse the membrane as a helical segment; that stretch reads PFVVDFLMGGVSAAVSKTAAAPIE. K30 provides a ligand contact to bongkrekate. The Mitochondrial matrix portion of the chain corresponds to 38–80; it reads RIKLLVQNQDEMIKAGRLDRRYNGIIDCFRRTTADEGLMALWR. Residues I62 and 81–83 contribute to the a cardiolipin site; that span reads GNT. Residues 81-104 form a helical membrane-spanning segment; that stretch reads GNTANVIRYFPTQALNFAFRDKFK. R88 provides a ligand contact to ADP. Residues 88–89 and N96 each bind bongkrekate; that span reads RY. Residues 105–115 are Mitochondrial intermembrane-facing; it reads AMFGYKKDKDG. The chain crosses the membrane as a helical span at residues 116-145; the sequence is YAKWMAGNLASGGAAGATSLLFVYSLDYAR. Residues 146-184 are Mitochondrial matrix-facing; it reads TRLANDAKSAKGGGARQFNGLIDVYRKTLASDGIAGLYR. Residues L166 and 184 to 185 each bind a cardiolipin; that span reads RG. The chain crosses the membrane as a helical span at residues 185–213; sequence GFGPSVAGIVVYRGLYFGMYDSIKPVVLV. Bongkrekate is bound at residue 196 to 197; it reads YR. Residues 214 to 216 lie on the Mitochondrial intermembrane side of the membrane; that stretch reads GPL. A helical transmembrane segment spans residues 217 to 242; that stretch reads ANNFLASFLLGWCVTTGAGIASYPLD. A Solcar repeat occupies 218–304; the sequence is NNFLASFLLG…LSIYDQLQIL (87 aa). Over 243-283 the chain is Mitochondrial matrix; that stretch reads TVRRRMMMTSGEAVKYKSSIDAFRQIIAKEGVKSLFKGAGA. R245 contributes to the ADP binding site. A Nucleotide carrier signature motif motif is present at residues 245 to 250; sequence RRRMMM. Residues 260–261 and 280–282 each bind a cardiolipin; these read SS and GAG. Residues 284–304 form a helical membrane-spanning segment; that stretch reads NILRGVAGAGVLSIYDQLQIL. The Mitochondrial intermembrane segment spans residues 305 to 315; that stretch reads LFGKAFKGGSG.

It belongs to the mitochondrial carrier (TC 2.A.29) family. As to quaternary structure, monomer.

The protein localises to the mitochondrion inner membrane. The catalysed reaction is ADP(in) + ATP(out) = ADP(out) + ATP(in). With respect to regulation, the matrix-open state (m-state) is inhibited by the membrane-permeable bongkrekic acid (BKA). The cytoplasmic-open state (c-state) is inhibited by the membrane-impermeable toxic inhibitor carboxyatractyloside (CATR). ADP:ATP antiporter that mediates import of ADP into the mitochondrial matrix for ATP synthesis, and export of ATP out to fuel the cell. Cycles between the cytoplasmic-open state (c-state) and the matrix-open state (m-state): operates by the alternating access mechanism with a single substrate-binding site intermittently exposed to either the cytosolic (c-state) or matrix (m-state) side of the inner mitochondrial membrane. In Thermothelomyces thermophilus (strain ATCC 42464 / BCRC 31852 / DSM 1799) (Sporotrichum thermophile), this protein is ADP/ATP translocase.